Consider the following 132-residue polypeptide: MGLTSQLIPTLVCLLALTSTFVHGHNFNITIKEIIKTLNILTARNDTCMELTVTNIFAAPKNTTDTETFCRATTVLQQLSTHSCSNKLLGGLHRNLKTMANMTCSVNEVKKSTLRDFLERLKAIVQRKYYRH.

The signal sequence occupies residues 1–24; sequence MGLTSQLIPTLVCLLALTSTFVHG. 4 N-linked (GlcNAc...) asparagine glycosylation sites follow: Asn28, Asn45, Asn62, and Asn101. 2 disulfides stabilise this stretch: Cys48-Cys84 and Cys70-Cys104.

The protein belongs to the IL-4/IL-13 family.

Its subcellular location is the secreted. In terms of biological role, participates in at least several B-cell activation processes as well as of other cell types. It is a costimulator of DNA-synthesis. It induces the expression of class II MHC molecules on resting B-cells. It enhances both secretion and cell surface expression of IgE and IgG1. It also regulates the expression of the low affinity Fc receptor for IgE (CD23) on both lymphocytes and monocytes. Positively regulates IL31RA expression in macrophages. Stimulates autophagy in dendritic cells by interfering with mTORC1 signaling and through the induction of RUFY4. In Ailuropoda melanoleuca (Giant panda), this protein is Interleukin-4 (IL4).